The primary structure comprises 448 residues: Tryptamine benzoyltransferase 2 (448 aa).

Residues 1-20 (MEITSSAMLKPAPTPTPHPL) form a disordered region. Residues His155 and Asp386 each act as proton acceptor in the active site.

This sequence belongs to the plant acyltransferase family.

Functionally, hydroxycinnamoyl transferase that catalyzes the transfer of an acyl from benzoyl-CoA to tryptamine, to produce benzoyl tryptamine. Serotonin and tyramine serve as acyl acceptors in vitro. Specific for benzoyl-CoA as acyl donor. Has no activity with p-coumaroyl-CoA, caffeoyl-CoA, or feruloyl-CoA as acyl donors. The polypeptide is Tryptamine benzoyltransferase 2 (Oryza sativa subsp. japonica (Rice)).